Here is a 228-residue protein sequence, read N- to C-terminus: Indole-3-glycerol phosphate synthase (228 aa).

It belongs to the TrpC family.

It carries out the reaction 1-(2-carboxyphenylamino)-1-deoxy-D-ribulose 5-phosphate + H(+) = (1S,2R)-1-C-(indol-3-yl)glycerol 3-phosphate + CO2 + H2O. It functions in the pathway amino-acid biosynthesis; L-tryptophan biosynthesis; L-tryptophan from chorismate: step 4/5. The sequence is that of Indole-3-glycerol phosphate synthase from Pyrococcus furiosus (strain ATCC 43587 / DSM 3638 / JCM 8422 / Vc1).